A 466-amino-acid chain; its full sequence is Glutamate--tRNA ligase 2 (466 aa).

Residues Pro-11–Gly-21 carry the 'HIGH' region motif. The short motif at Lys-239–Arg-243 is the 'KMSKS' region element. Lys-242 is an ATP binding site.

Belongs to the class-I aminoacyl-tRNA synthetase family. Glutamate--tRNA ligase type 1 subfamily. In terms of assembly, monomer.

It is found in the cytoplasm. The enzyme catalyses tRNA(Glu) + L-glutamate + ATP = L-glutamyl-tRNA(Glu) + AMP + diphosphate. Its function is as follows. Catalyzes the attachment of glutamate to tRNA(Glu) in a two-step reaction: glutamate is first activated by ATP to form Glu-AMP and then transferred to the acceptor end of tRNA(Glu). The polypeptide is Glutamate--tRNA ligase 2 (Roseobacter denitrificans (strain ATCC 33942 / OCh 114) (Erythrobacter sp. (strain OCh 114))).